Consider the following 215-residue polypeptide: Small ribosomal subunit protein uS2 (215 aa).

Belongs to the universal ribosomal protein uS2 family.

This is Small ribosomal subunit protein uS2 from Caldivirga maquilingensis (strain ATCC 700844 / DSM 13496 / JCM 10307 / IC-167).